Reading from the N-terminus, the 852-residue chain is Eukaryotic translation initiation factor 3 subunit C (852 aa).

The interval M1–K90 is disordered. Over residues S14–S57 the composition is skewed to acidic residues. The region spanning F597–H772 is the PCI domain. The segment covering T798 to M809 has biased composition (polar residues). A disordered region spans residues T798–A852. The segment covering Q810 to Q822 has biased composition (low complexity). Basic and acidic residues predominate over residues K823 to R835. Positions V841–A852 are enriched in polar residues.

Belongs to the eIF-3 subunit C family. Component of the eukaryotic translation initiation factor 3 (eIF-3) complex.

The protein resides in the cytoplasm. In terms of biological role, component of the eukaryotic translation initiation factor 3 (eIF-3) complex, which is involved in protein synthesis of a specialized repertoire of mRNAs and, together with other initiation factors, stimulates binding of mRNA and methionyl-tRNAi to the 40S ribosome. The eIF-3 complex specifically targets and initiates translation of a subset of mRNAs involved in cell proliferation. The protein is Eukaryotic translation initiation factor 3 subunit C of Debaryomyces hansenii (strain ATCC 36239 / CBS 767 / BCRC 21394 / JCM 1990 / NBRC 0083 / IGC 2968) (Yeast).